Here is a 408-residue protein sequence, read N- to C-terminus: Putative transporter AmpG 2 (408 aa).

Transmembrane regions (helical) follow at residues 11-31 (IFNILFILIIAFPGGLIYLLT), 49-69 (IGLFGLVNFIHIFKFLWGPLL), 84-104 (YCLVITLINCIFCVYVLTSFN), 110-130 (IPFVLCLVVLAFFSSIYDMLI), 154-174 (FRIGILISGSGALYLSTIISW), 177-197 (VYRTMAILCIPSLLLIIFYPL), 224-244 (CIVIISFMLLYRLQDSFLSIM), 261-281 (VGYKAFGMCATIFGGVIGGFL), 294-311 (VLIYHALSSLSFIYLYFL), 353-373 (IALITSITNVGTILIGSISGY), and 382-402 (YFFIVAGLCFIPAYILILYLP).

The protein belongs to the major facilitator superfamily.

The protein localises to the cell inner membrane. In Rickettsia prowazekii (strain Madrid E), this protein is Putative transporter AmpG 2 (ampG2).